A 390-amino-acid polypeptide reads, in one-letter code: Two-component response regulator ORR29 (390 aa).

The 118-residue stretch at 13 to 130 (SAMVIDEDKC…TIKNLWQYVD (118 aa)) folds into the Response regulatory domain. Position 65 is a 4-aspartylphosphate (D65). The segment at residues 169-226 (KKYYLMWTPHLQKKFLHALQILGKDASPKNIKKIMGVDNIDCRQIAAHLQKHRLRLTK) is a DNA-binding region (myb-like GARP). Disordered regions lie at residues 233 to 271 (FTTD…QPTE) and 303 to 339 (SKHS…SGDH). A compositionally biased stretch (polar residues) spans 257 to 271 (NASTLQPRSNTQPTE).

The protein belongs to the ARR family. Type-B subfamily. Two-component system major event consists of a His-to-Asp phosphorelay between a sensor histidine kinase (HK) and a response regulator (RR). In plants, the His-to-Asp phosphorelay involves an additional intermediate named Histidine-containing phosphotransfer protein (HPt). This multistep phosphorelay consists of a His-Asp-His-Asp sequential transfer of a phosphate group between first a His and an Asp of the HK protein, followed by the transfer to a conserved His of the HPt protein and finally the transfer to an Asp in the receiver domain of the RR protein.

The protein resides in the cytoplasm. The protein localises to the cytosol. It localises to the nucleus. In terms of biological role, transcriptional activator that binds specific DNA sequence. Functions as a response regulator involved in His-to-Asp phosphorelay signal transduction system. Phosphorylation of the Asp residue in the receiver domain activates the ability of the protein to promote the transcription of target genes. May directly activate some type-A response regulators in response to cytokinins. Functions as a response regulator in response to cytokinins. The sequence is that of Two-component response regulator ORR29 from Oryza sativa subsp. japonica (Rice).